The chain runs to 250 residues: Small ribosomal subunit protein uS2 (250 aa).

It belongs to the universal ribosomal protein uS2 family.

The polypeptide is Small ribosomal subunit protein uS2 (Polaromonas sp. (strain JS666 / ATCC BAA-500)).